The sequence spans 226 residues: Fibronectin type III domain-containing protein 10 (226 aa).

An N-terminal signal peptide occupies residues 1-20; sequence MRAPPLLLLLAACAPPPCAA. Over 21–182 the chain is Extracellular; it reads AAPTPPGWEP…FTAEPAGMQD (162 aa). The Fibronectin type-III domain occupies 74–166; it reads PAGRSLRASV…PAAAAPETPE (93 aa). N86 and N109 each carry an N-linked (GlcNAc...) asparagine glycan. A helical membrane pass occupies residues 183 to 203; sequence IVVAMTAVGGSICVMLVVICL. Residues 204–226 are Cytoplasmic-facing; the sequence is LVAYITENLMRPALARPGLRRHP.

It is found in the membrane. The protein is Fibronectin type III domain-containing protein 10 (FNDC10) of Homo sapiens (Human).